We begin with the raw amino-acid sequence, 233 residues long: 5-demethoxyubiquinone hydroxylase, mitochondrial (233 aa).

The N-terminal 15 residues, 1–15 (MLSRVSVFKPASRGF), are a transit peptide targeting the mitochondrion. Ser20 and Ser28 each carry phosphoserine. Thr32 bears the Phosphothreonine mark. The Fe cation site is built by Glu63, Glu95, His98, Glu147, Glu194, and His197.

It belongs to the COQ7 family. In terms of assembly, component of a multi-subunit COQ enzyme complex, composed of at least COQ3, COQ4, COQ5, COQ6, COQ7 and COQ9. The cofactor is Fe cation. Phosphorylated. Dephosphorylated by PTC7; dephosphorylation is essential for enzyme activation.

The protein localises to the mitochondrion inner membrane. The enzyme catalyses a 5-methoxy-2-methyl-3-(all-trans-polyprenyl)benzene-1,4-diol + AH2 + O2 = a 3-demethylubiquinol + A + H2O. It carries out the reaction a 5-methoxy-2-methyl-3-(all-trans-polyprenyl)benzoquinone + NADH + O2 = a 3-demethylubiquinone + NAD(+) + H2O. It participates in cofactor biosynthesis; ubiquinone biosynthesis. With respect to regulation, dephosphorylation by PTC7 leads to activation. Functionally, catalyzes the hydroxylation of 2-hexaprenyl-3-methyl-6-methoxy-1,4-benzoquinol (DMQH2) during ubiquinone biosynthesis. Also catalyzes the hydroxylation of the 5-methoxy-2-methyl-3-(all-trans-polyprenyl)benzoquinone at the C6 position and participates in the biosynthesis of ubiquinone. Also has a structural role in the COQ enzyme complex, stabilizing COQ3 and COQ4 polypeptides. This Saccharomyces cerevisiae (strain ATCC 204508 / S288c) (Baker's yeast) protein is 5-demethoxyubiquinone hydroxylase, mitochondrial.